The chain runs to 376 residues: Heat-inducible transcription repressor HrcA (376 aa).

The protein belongs to the HrcA family.

Its function is as follows. Negative regulator of class I heat shock genes (grpE-dnaK-dnaJ and groELS operons). Prevents heat-shock induction of these operons. The polypeptide is Heat-inducible transcription repressor HrcA (Chloroflexus aggregans (strain MD-66 / DSM 9485)).